Consider the following 222-residue polypeptide: E3 ubiquitin-protein ligase RNF138 (222 aa).

Residues 17–57 (CPVCQEILQTPVRTQTCRHVFCRKCFMLAMKSGGAYCPLCR) form an RING-type zinc finger. Positions 85, 88, 100, and 104 each coordinate Zn(2+). The C2HC RNF-type zinc-finger motif lies at 85-104 (CMYCGKMMKLHYMKLHYKSC). C2H2-type zinc fingers lie at residues 134–157 (YKCPLCSEHNLNQRSLLEHCNNVH) and 164–192 (MVCPICATLPWGDPIQTTGNVIAHLNARH). Residues 202–220 (INIDEEAQFQIAVANSYKI) form the UIM domain.

Interacts with nlk.2 (via C-terminus) and ube2k. Post-translationally, auto-ubiquitinated.

It localises to the chromosome. It catalyses the reaction S-ubiquitinyl-[E2 ubiquitin-conjugating enzyme]-L-cysteine + [acceptor protein]-L-lysine = [E2 ubiquitin-conjugating enzyme]-L-cysteine + N(6)-ubiquitinyl-[acceptor protein]-L-lysine.. It participates in protein modification; protein ubiquitination. E3 ubiquitin-protein ligase involved in DNA damage response by promoting DNA resection and homologous recombination. Recruited to sites of double-strand breaks following DNA damage and specifically promotes double-strand break repair via homologous recombination. Together with nlk.2, involved in the ubiquitination and degradation of TCF/LEF. Also exhibits auto-ubiquitination activity in combination with ube2k. May act as a negative regulator in the Wnt/beta-catenin-mediated signaling pathway. This is E3 ubiquitin-protein ligase RNF138 (rnf138) from Xenopus laevis (African clawed frog).